A 262-amino-acid polypeptide reads, in one-letter code: Zinc finger protein 138 (262 aa).

The C2H2-type 1 zinc finger occupies 110–132 (FRCKECDKSLCMLSRLTQHKKIH). Residues 138 to 160 (YKCEECGKTFNWSTNLSKPKKIH) form a C2H2-type 2; degenerate zinc finger. Residues 166-188 (YKCEVCGKAFHQSSILTKHKIIR) form a C2H2-type 3; degenerate zinc finger. The C2H2-type 4 zinc finger occupies 194-216 (YKCAHCGKAFKQSSHLTRHKIIH). The C2H2-type 5; degenerate zinc-finger motif lies at 222–244 (YKCEQCGKVFKQSPTLTKHQIIY). The C2H2-type 6; degenerate zinc-finger motif lies at 250-262 (YKCEECGKAFNLS).

Belongs to the krueppel C2H2-type zinc-finger protein family.

The protein resides in the nucleus. In terms of biological role, may be involved in transcriptional regulation as a repressor. The polypeptide is Zinc finger protein 138 (ZNF138) (Homo sapiens (Human)).